The following is a 145-amino-acid chain: D-aminoacyl-tRNA deacylase (145 aa).

A Gly-cisPro motif, important for rejection of L-amino acids motif is present at residues 137–138 (GP).

Belongs to the DTD family. As to quaternary structure, homodimer.

The protein localises to the cytoplasm. It carries out the reaction glycyl-tRNA(Ala) + H2O = tRNA(Ala) + glycine + H(+). The enzyme catalyses a D-aminoacyl-tRNA + H2O = a tRNA + a D-alpha-amino acid + H(+). Its function is as follows. An aminoacyl-tRNA editing enzyme that deacylates mischarged D-aminoacyl-tRNAs. Also deacylates mischarged glycyl-tRNA(Ala), protecting cells against glycine mischarging by AlaRS. Acts via tRNA-based rather than protein-based catalysis; rejects L-amino acids rather than detecting D-amino acids in the active site. By recycling D-aminoacyl-tRNA to D-amino acids and free tRNA molecules, this enzyme counteracts the toxicity associated with the formation of D-aminoacyl-tRNA entities in vivo and helps enforce protein L-homochirality. The chain is D-aminoacyl-tRNA deacylase from Deinococcus radiodurans (strain ATCC 13939 / DSM 20539 / JCM 16871 / CCUG 27074 / LMG 4051 / NBRC 15346 / NCIMB 9279 / VKM B-1422 / R1).